The following is a 394-amino-acid chain: Endothelial cell-selective adhesion molecule (394 aa).

The N-terminal stretch at 1–29 (MILQAGTPETSLLRVLFLGLSTLAAFSRA) is a signal peptide. Residues 30-251 (QMELHVPPGL…LDVMTGSKAA (222 aa)) are Extracellular-facing. The Ig-like V-type domain maps to 37-146 (PGLNKLEAVE…EGKSIGHSIK (110 aa)). N-linked (GlcNAc...) asparagine glycans are attached at residues N111, N172, N216, and N239. Residues 159–243 (PSCSLQGVPY…GFAKCNVTLD (85 aa)) form the Ig-like C2-type domain. C177 and C227 are disulfide-bonded. Residues 252-272 (VVAGAVVGTFVGLVLIAGLVL) form a helical membrane-spanning segment. Residues 273 to 394 (LYQRRSKTLE…PAQSQAGSLV (122 aa)) are Cytoplasmic-facing. The residue at position 304 (S304) is a Phosphoserine. Polar residues-rich tracts occupy residues 304–318 (SDTI…SVTS) and 335–347 (FTPT…QALS). The segment at 304 to 372 (SDTISKNGTL…SLTPGGVSSS (69 aa)) is disordered. A phosphothreonine mark is found at T336 and T338. A phosphoserine mark is found at S340, S343, S348, and S375.

Interacts with MAGI1. Highly expressed in the heart and lung. Weakly expressed in the kidney and skin. Expression is restricted to the vascular endothelial cells. Expressed in the kidney, heart and tongue (at protein level). Also expressed on megakaryocytes and activated platelets.

The protein resides in the cell junction. Its subcellular location is the adherens junction. It localises to the tight junction. The protein localises to the cell membrane. Can mediate aggregation most likely through a homophilic molecular interaction. This Mus musculus (Mouse) protein is Endothelial cell-selective adhesion molecule (Esam).